A 124-amino-acid polypeptide reads, in one-letter code: Urease subunit beta (124 aa).

Belongs to the urease beta subunit family. Heterotrimer of UreA (gamma), UreB (beta) and UreC (alpha) subunits. Three heterotrimers associate to form the active enzyme.

The protein resides in the cytoplasm. The enzyme catalyses urea + 2 H2O + H(+) = hydrogencarbonate + 2 NH4(+). It functions in the pathway nitrogen metabolism; urea degradation; CO(2) and NH(3) from urea (urease route): step 1/1. In Bacillus velezensis (strain DSM 23117 / BGSC 10A6 / LMG 26770 / FZB42) (Bacillus amyloliquefaciens subsp. plantarum), this protein is Urease subunit beta.